Consider the following 288-residue polypeptide: Acetyl-coenzyme A carboxylase carboxyl transferase subunit beta (288 aa).

The CoA carboxyltransferase N-terminal domain maps to 30–288 (IMTKCPKCKK…KMHQEVKTNA (259 aa)). Zn(2+) contacts are provided by Cys34, Cys37, Cys53, and Cys56. The C4-type zinc finger occupies 34 to 56 (CPKCKKIMYTKELAENLNVCFNC).

This sequence belongs to the AccD/PCCB family. Acetyl-CoA carboxylase is a heterohexamer composed of biotin carboxyl carrier protein (AccB), biotin carboxylase (AccC) and two subunits each of ACCase subunit alpha (AccA) and ACCase subunit beta (AccD). Zn(2+) is required as a cofactor.

It is found in the cytoplasm. The enzyme catalyses N(6)-carboxybiotinyl-L-lysyl-[protein] + acetyl-CoA = N(6)-biotinyl-L-lysyl-[protein] + malonyl-CoA. It participates in lipid metabolism; malonyl-CoA biosynthesis; malonyl-CoA from acetyl-CoA: step 1/1. Component of the acetyl coenzyme A carboxylase (ACC) complex. Biotin carboxylase (BC) catalyzes the carboxylation of biotin on its carrier protein (BCCP) and then the CO(2) group is transferred by the transcarboxylase to acetyl-CoA to form malonyl-CoA. This chain is Acetyl-coenzyme A carboxylase carboxyl transferase subunit beta, found in Staphylococcus saprophyticus subsp. saprophyticus (strain ATCC 15305 / DSM 20229 / NCIMB 8711 / NCTC 7292 / S-41).